Consider the following 164-residue polypeptide: Peptidyl-prolyl cis-trans isomerase A-like 4D (164 aa).

The PPIase cyclophilin-type domain maps to 7–163 (FFEITRDGKP…KKITIADCGQ (157 aa)).

This sequence belongs to the cyclophilin-type PPIase family. PPIase A subfamily.

Its subcellular location is the cytoplasm. It catalyses the reaction [protein]-peptidylproline (omega=180) = [protein]-peptidylproline (omega=0). Its function is as follows. PPIases accelerate the folding of proteins. It catalyzes the cis-trans isomerization of proline imidic peptide bonds in oligopeptides. The chain is Peptidyl-prolyl cis-trans isomerase A-like 4D from Homo sapiens (Human).